Consider the following 393-residue polypeptide: Chorismate synthase (393 aa).

NADP(+) is bound by residues Arg39 and Arg45. Residues 133–135 (RSS), 256–257 (NA), Gly301, 316–320 (KPIPT), and Arg342 contribute to the FMN site.

It belongs to the chorismate synthase family. In terms of assembly, homotetramer. It depends on FMNH2 as a cofactor.

The enzyme catalyses 5-O-(1-carboxyvinyl)-3-phosphoshikimate = chorismate + phosphate. It participates in metabolic intermediate biosynthesis; chorismate biosynthesis; chorismate from D-erythrose 4-phosphate and phosphoenolpyruvate: step 7/7. Catalyzes the anti-1,4-elimination of the C-3 phosphate and the C-6 proR hydrogen from 5-enolpyruvylshikimate-3-phosphate (EPSP) to yield chorismate, which is the branch point compound that serves as the starting substrate for the three terminal pathways of aromatic amino acid biosynthesis. This reaction introduces a second double bond into the aromatic ring system. The sequence is that of Chorismate synthase from Lysinibacillus sphaericus (strain C3-41).